The chain runs to 93 residues: MDSHTTEKRRGSYLRVLFKNGRLPVEGFLWNCDPLTGTLILIQPLTPNTDEVEDTHYRFYGIMSDAIQTIEPDESMSPLNQQSLAEYDSLLTS.

The region spanning 1–76 (MDSHTTEKRR…IQTIEPDESM (76 aa)) is the Sm domain.

Part of the core SMN complex at least composed of smn1, yip11/gem2, gem6, gem7 and gem8. Interacts with gem7; the interaction is direct.

Functionally, the SMN complex catalyzes the assembly of small nuclear ribonucleoproteins (snRNPs), the building blocks of the spliceosome, and thereby plays an important role in the splicing of cellular pre-mRNAs. Most spliceosomal snRNPs contain a common set of Sm proteins smb1, smd1, smd2, smd3, sme1, smf1 and smg1 that assemble in a heptameric protein ring on the Sm site of the small nuclear RNA to form the core snRNP (Sm core). In the cytosol, the Sm proteins smd1, smd2, sme1, smf1 and smg1 (5Sm) are trapped in an inactive 6S pICln-Sm complex by the chaperone saf5. To complete assembly of core snRNPs, the SMN complex accepts 5Sm from saf5. Binding of snRNA inside 5Sm triggers eviction of the SMN complex, thereby allowing binding of smd3 and smb1 to complete assembly of the core snRNP. This is an uncharacterized protein from Schizosaccharomyces pombe (strain 972 / ATCC 24843) (Fission yeast).